The chain runs to 150 residues: UPF0756 membrane protein plu2726 (150 aa).

4 helical membrane-spanning segments follow: residues 8–28, 51–71, 88–108, and 123–143; these read LLVL…TVTL, YGLT…IASG, LLAI…VSLM, and VLGV…AGIL.

It belongs to the UPF0756 family.

Its subcellular location is the cell membrane. The polypeptide is UPF0756 membrane protein plu2726 (Photorhabdus laumondii subsp. laumondii (strain DSM 15139 / CIP 105565 / TT01) (Photorhabdus luminescens subsp. laumondii)).